The sequence spans 175 residues: tRNA-acetylating toxin 3 (175 aa).

Acetyl-CoA is bound by residues Leu-95, Val-97, Gly-103, Gly-105, Gly-107, Ala-108, Asp-133, Gln-138, Asp-141, and Trp-142. Tyr-143 is a catalytic residue. The acetyl-CoA site is built by Gly-145 and Phe-146.

The protein belongs to the acetyltransferase family. GNAT subfamily. As to quaternary structure, homodimer (in absence of antitoxin); has a condensed and elongated form. Forms a complex with cognate antitoxin TacA3. Forms a 4:2 antitoxin:toxin complex with cognate antitoxin TacA3. Forms a 4:4 antitoxin:toxin complex with promoter DNA, where 2 TacT3 dimers bridge 2 TacA3 dimers. Only TacA3 contacts promoter DNA in the octomeric form. TacT3 may contact DNA in the hexameric form.

It carries out the reaction glycyl-tRNA(Gly) + acetyl-CoA = N-acetylglycyl-tRNA(Gly) + CoA + H(+). Functionally, toxic component of a type II toxin-antitoxin (TA) system. Acetylates tRNA and inhibits translation. Acetylates only Gly-tRNA on all 3 Gly-tRNA(Gly) isoacceptors in situ. In vitro acetylates mainly Ile/Leu and Gly. Overexpression during the lag phase of a tacA3-tacT3 deletion strain leads to a 150-fold increase in persister cells in the presence of cefotaxime and a non-growth state in the absence of antibiotic. Persister cell formation and the growth defect are neutralized by cognate antitoxin TacA3, but not by TacA1 or TacA2. Plays a role in persister cell formation. Its function is as follows. The TacA3-TacT3 complex both represses and derepresses expression of its own operon. The hexameric 4:2 TacA3-TacT3 complex binds promoter DNA and represses its transcription; both subunits are required. The octomeric 4:4 TacA3-TacT3 complex derepresses the operon. The shift from hexameric to octomeric complex probably alters DNA-binding, leading to dissociation from the operator DNA and derepression. The sequence is that of tRNA-acetylating toxin 3 from Salmonella typhimurium (strain 14028s / SGSC 2262).